A 331-amino-acid chain; its full sequence is Malate dehydrogenase (331 aa).

14-20 is an NAD(+) binding site; sequence GAAGSIG. 2 residues coordinate substrate: arginine 95 and arginine 101. NAD(+)-binding positions include asparagine 108, glutamine 115, and 132–134; that span reads VGN. Residues asparagine 134 and arginine 165 each contribute to the substrate site. Histidine 190 serves as the catalytic Proton acceptor.

The protein belongs to the LDH/MDH superfamily. MDH type 2 family.

The catalysed reaction is (S)-malate + NAD(+) = oxaloacetate + NADH + H(+). In terms of biological role, catalyzes the reversible oxidation of malate to oxaloacetate. The protein is Malate dehydrogenase of Rhodococcus opacus (strain B4).